A 141-amino-acid chain; its full sequence is Large ribosomal subunit protein uL11 (141 aa).

The protein belongs to the universal ribosomal protein uL11 family. As to quaternary structure, part of the ribosomal stalk of the 50S ribosomal subunit. Interacts with L10 and the large rRNA to form the base of the stalk. L10 forms an elongated spine to which L12 dimers bind in a sequential fashion forming a multimeric L10(L12)X complex. Post-translationally, one or more lysine residues are methylated.

In terms of biological role, forms part of the ribosomal stalk which helps the ribosome interact with GTP-bound translation factors. This is Large ribosomal subunit protein uL11 from Exiguobacterium sp. (strain ATCC BAA-1283 / AT1b).